The primary structure comprises 248 residues: GPN-loop GTPase PAB0955 (248 aa).

10–15 (GSGKTT) is a GTP binding site. The short motif at 65 to 67 (GPN) is the Gly-Pro-Asn (GPN)-loop; involved in dimer interface element. GTP is bound by residues 165–168 (NKVD) and alanine 224.

It belongs to the GPN-loop GTPase family. As to quaternary structure, homodimer. Interacts with DNA topoisomerase VI subunit B (top6B), DNA primase DnaG and RF-C.

Functionally, small GTPase that may be involved in genome maintenance. Has weak intrinsic GTPase activity but displays no ATPase activity. This Pyrococcus abyssi (strain GE5 / Orsay) protein is GPN-loop GTPase PAB0955.